Reading from the N-terminus, the 403-residue chain is MENKSEMINATTIEFKTSSAEGSVDFVNVFDLEKMAQKVIPKGAFGYIASGAGDTFTLHENIRSFNHKLIPHGLKGVENPSTEITFIGDKLASPIILAPVAAHKLANEQGEIASAKGVKEFGTIYTTSSYSTTDLPEISQTLGDSPHWFQFYYSKDDGINRHIMDRLKAEGVKSIVLTVDATVGGNREVDKRNGFVFPVGMPIVQEYLPNGAGKTMDYVYKATKQALSPKDVEYIAQYSGLPVYVKGPQCAEDAFRALEAGASGIWVTNHGGRQLDGGPAAFDSLQEVAESVDRRVPIVFDSGVRRGQHVFKALASGADLVALGRPVIYGLAMGGSVGTRQVFEKINDELKMVMQLAGTQTIDDVKHFKLRHNPYDSSIPFSPKCFKIRLIFRRPNQILGQFF.

In terms of domain architecture, FMN hydroxy acid dehydrogenase spans 21–375 (EGSVDFVNVF…KHFKLRHNPY (355 aa)). Residue tyrosine 47 coordinates pyruvate. FMN contacts are provided by residues 99-101 (PVA), serine 128, and glutamine 150. Residue tyrosine 152 coordinates pyruvate. Threonine 178 contacts FMN. Pyruvate contacts are provided by arginine 187 and tyrosine 220. Lysine 246 is a binding site for FMN. Pyruvate-binding residues include histidine 270 and arginine 273. The Proton acceptor role is filled by histidine 270. Residues 301–305 (DSGVR) and arginine 325 each bind FMN.

Belongs to the FMN-dependent alpha-hydroxy acid dehydrogenase family. Homotetramer. FMN serves as cofactor.

The enzyme catalyses (S)-lactate + O2 = pyruvate + H2O2. Catalyzes the oxidation of (S)-lactate (L-lactate) to pyruvate, with a reduction of O2 to H2O2. Is likely involved in the L-lactate aerobic metabolism of S.iniae that enables the bacterium to utilize L-lactate as an energy source for growth under aerobic conditions in the absence (or at low concentrations) of glucose. This chain is L-lactate oxidase, found in Streptococcus iniae (Streptococcus shiloi).